Consider the following 318-residue polypeptide: Energy-coupling factor transporter ATP-binding protein EcfA2 (318 aa).

One can recognise an ABC transporter domain in the interval 22–271 (LRAQGLKCVF…PEIMQTTSIA (250 aa)). 59–66 (GNSGSGKS) lines the ATP pocket.

The protein belongs to the ABC transporter superfamily. Energy-coupling factor EcfA family. Forms a stable energy-coupling factor (ECF) transporter complex composed of 2 membrane-embedded substrate-binding proteins (S component), 2 ATP-binding proteins (A component) and 2 transmembrane proteins (T component).

The protein resides in the cell membrane. Functionally, ATP-binding (A) component of a common energy-coupling factor (ECF) ABC-transporter complex. Unlike classic ABC transporters this ECF transporter provides the energy necessary to transport a number of different substrates. The sequence is that of Energy-coupling factor transporter ATP-binding protein EcfA2 from Mycoplasmoides gallisepticum (strain R(low / passage 15 / clone 2)) (Mycoplasma gallisepticum).